We begin with the raw amino-acid sequence, 1003 residues long: Cation-transporting ATPase HMA5 (1003 aa).

The disordered stretch occupies residues 6–25; the sequence is LSAVAGGGRPAAAGGGGDEM. Residues 10-22 show a composition bias toward gly residues; the sequence is AGGGRPAAAGGGG. HMA domains follow at residues 51 to 117, 133 to 199, and 207 to 273; these read EEAH…FDAE, LSAQ…FEAA, and DKIL…NGRL. Positions 62, 65, 144, and 147 each coordinate Cu cation. A run of 8 helical transmembrane segments spans residues 302–322, 331–351, 372–392, 396–416, 562–582, 599–619, 938–958, and 966–986; these read SLFLSIPVFFIRMVCPHIPFI, GPFHMGDLLKWILVSIVQFVV, VLVVLGTTASYVYSVCALLYG, GFHPPIYFETSAMIITFVLFG, IFVPIVITLSMITFLVWFLCG, FVFSLMFAIAVVVIACPCALG, FFAMAYNVVAIPVAAGALFPF, and WLAGACMAFSSVSVVCSSLLL.

It belongs to the cation transport ATPase (P-type) (TC 3.A.3) family. Type IB subfamily. Expressed in root vascular cylinder, vascular bundles and mesophyll cells of leaf blades, and anther walls and microspores of stamens.

The protein localises to the cell membrane. Functionally, metal efflux transporter that may play a role in detoxification of heavy metals, such as zinc, copper, lead and cadmium, especially in the shoots. In Oryza sativa subsp. japonica (Rice), this protein is Cation-transporting ATPase HMA5.